Consider the following 380-residue polypeptide: N-acetylaspartylglutamate synthase A (380 aa).

The region spanning 115–300 (FQELAGHGVP…VGAIIADYAM (186 aa)) is the ATP-grasp domain. ATP is bound by residues lysine 154, 189–199 (QKYVKESHGKD), and arginine 215. 3 residues coordinate Mg(2+): aspartate 260, glutamate 273, and asparagine 275. Mn(2+)-binding residues include aspartate 260, glutamate 273, and asparagine 275. Serine 319 is subject to Phosphoserine. Residues 345–370 (GSTSSESEPELGEARDSSVKTMGAPP) form a disordered region.

The protein belongs to the RimK family. Mg(2+) is required as a cofactor. Mn(2+) serves as cofactor. In terms of tissue distribution, highly expressed in spinal cord and brain.

It localises to the cytoplasm. The catalysed reaction is N-acetyl-L-aspartate + L-glutamate + ATP = N-acetyl-L-aspartyl-L-glutamate + ADP + phosphate + H(+). The enzyme catalyses N-acetyl-L-aspartate + 2 L-glutamate + 2 ATP = N-acetyl-L-aspartyl-L-glutamyl-L-glutamate + 2 ADP + 2 phosphate + 2 H(+). Functionally, catalyzes the synthesis of N-acetyl-L-aspartyl-L-glutamate (NAAG) and N-acetyl-L-aspartyl-L-glutamyl-L-glutamate. The protein is N-acetylaspartylglutamate synthase A (Rimkla) of Mus musculus (Mouse).